The following is a 374-amino-acid chain: RNA binding protein fox-1 homolog 3 (374 aa).

Pro residues predominate over residues 1-29 (MAQPYPPAQYPPPPQNGIPAEYAPPPPHP). The segment at 1–105 (MAQPYPPAQY…QQPKRLHVSN (105 aa)) is disordered. Residues 49-74 (TPAQTHPEQPGTEASTQPIAGTQTVP) are compositionally biased toward polar residues. The 77-residue stretch at 99-175 (KRLHVSNIPF…RKIEVNNATA (77 aa)) folds into the RRM domain. An Asymmetric dimethylarginine; alternate modification is found at Arg223. Arg223 is subject to Omega-N-methylarginine; alternate. Arg319 bears the Asymmetric dimethylarginine mark.

In terms of processing, phosphorylated. Widely expressed in brain, including in cerebral cortex, hippocampus, thalamus, caudate/putamen, cerebellum, as well as in the spinal cord (at protein level). Not expressed in all neuronal cells within a region, in cerebellum, expression is absent in Purkinje cells (at protein level). Expressed in the retina in the ganglion cells and some cells in the inner nuclear layer, but absent from the photoreceptor cells and most cells in the inner nuclear layer (at protein level).

It is found in the nucleus. The protein resides in the cytoplasm. Pre-mRNA alternative splicing regulator. Regulates alternative splicing of RBFOX2 to enhance the production of mRNA species that are targeted for nonsense-mediated decay (NMD). The chain is RNA binding protein fox-1 homolog 3 (Rbfox3) from Mus musculus (Mouse).